Consider the following 270-residue polypeptide: Thiosulfate dehydrogenase (270 aa).

Positions 1-27 (MRGDVRVHTASPIAAAWLLAVGLVAHA) are cleaved as a signal peptide. 2 consecutive Cytochrome c domains span residues 44–158 (PDGA…PVGA) and 174–260 (PDGV…LTHP). Heme c-binding residues include Cys-76, Cys-79, His-80, Cys-187, Cys-190, and His-191.

As to quaternary structure, monomer. In terms of processing, binds 2 heme c groups covalently per subunit.

The protein resides in the periplasm. The enzyme catalyses 2 thiosulfate + 2 Fe(III)-[cytochrome c] = tetrathionate + 2 Fe(II)-[cytochrome c] + 2 H(+). Catalyzes the oxidation of 2 molecules of thiosulfate to tetrathionate. This is Thiosulfate dehydrogenase (tsdA) from Allochromatium vinosum (strain ATCC 17899 / DSM 180 / NBRC 103801 / NCIMB 10441 / D) (Chromatium vinosum).